Reading from the N-terminus, the 150-residue chain is MAYLDPTLLILLVLAGLGIISHNMTVTLAILVLLAIRITPLNSYFPWVEKYGLSIGIVILTIGVMAPIASGKITASEVMHSFLHWKSLLAILIGVAVSWLGGRGVSLMSNQPSVVAGLLVGTVMGVALFRGVPVGPLIAAGLLSLLIGKT.

The next 4 helical transmembrane spans lie at 1 to 21 (MAYL…GIIS), 51 to 71 (YGLS…IASG), 82 to 102 (FLHW…WLGG), and 127 to 147 (ALFR…SLLI).

This sequence belongs to the UPF0756 family.

The protein resides in the cell membrane. The polypeptide is UPF0756 membrane protein PC1_1142 (Pectobacterium carotovorum subsp. carotovorum (strain PC1)).